The primary structure comprises 100 residues: Putative septation protein SpoVG (100 aa).

Belongs to the SpoVG family.

In terms of biological role, could be involved in septation. This is Putative septation protein SpoVG from Staphylococcus haemolyticus (strain JCSC1435).